The primary structure comprises 489 residues: Cytochrome P450 monooxygenase bfoB (489 aa).

Residues 1–18 (MLALYLIAGLLVGLLVYR) form the signal peptide. Residues N113, N348, and N386 are each glycosylated (N-linked (GlcNAc...) asparagine). C429 contacts heme.

This sequence belongs to the cytochrome P450 family. The cofactor is heme.

It carries out the reaction 2 fonsecin B + NADPH + O2 + H(+) = bifonsecin B + NADP(+) + 2 H2O. The catalysed reaction is 2 rubrofusarin B + NADPH + O2 + 3 H(+) = nigerone + NADP(+) + 2 H2O. It functions in the pathway secondary metabolite biosynthesis. In terms of biological role, cytochrome P450 monooxygenase; part of the gene cluster that mediates the biosynthesis of bifonsecin B, a dimeric gamma-naphthopyrone. The first step in the biosynthesis of bifonsecin B is the production of gamma-naphthopyrone precursor YWA1 by the non-reducing polyketide synthase albA, via condensation of one acetyl-CoA starter unit with 6 malonyl-CoA units. YWA1 is then methylated by bfoE at position C-6 to yield foncesin which is further methylated at position C-8 by bfoD to produce fonsecin B. A key enzyme in the biosynthetic pathway is the cytochrome P450 monooxygenase bfoB which catalyzes the oxidative dimerization of fonsecin B to bifonsecin B. Bfob also catalyzes the oxidative dimerization of rubrofusarin B into nigerone. The stereoselectivity of bfoB is influenced by the two natural monomeric substrates; homodimerization of fonsecin B yields a stereochemically pure biaryl, M-foncerine B, while rubrofusarin B yields a mixture of enantiomers M- and P-nigerone. The sequence is that of Cytochrome P450 monooxygenase bfoB from Aspergillus brasiliensis (strain CBS 101740 / IMI 381727 / IBT 21946).